A 98-amino-acid polypeptide reads, in one-letter code: HIG1 domain family member 1B (98 aa).

Residues 1-28 are Cytoplasmic-facing; the sequence is MSANKGWWVPPEGEDNLSKKFLRKTRES. Residues 1-94 form the HIG1 domain; sequence MSANKGWWVP…YRDYIKRVSE (94 aa). Residues 29–46 traverse the membrane as a helical segment; it reads PLVPIGVAGCLVIAAYRI. At 47–60 the chain is on the extracellular side; it reads YRLKARGSTKLSIH. The chain crosses the membrane as a helical span at residues 61 to 83; it reads LIHTRVAAQACAVGAIMLGAMYT. The Cytoplasmic segment spans residues 84–98; it reads MYRDYIKRVSEDAEK.

Its subcellular location is the membrane. In Mus musculus (Mouse), this protein is HIG1 domain family member 1B (Higd1b).